Reading from the N-terminus, the 640-residue chain is Cytochrome P450 monooxygenase cyp1 (640 aa).

An N-linked (GlcNAc...) asparagine glycan is attached at N71. A helical transmembrane segment spans residues 120 to 139; sequence LLVFLVGLFLGTIYLLYRYW. N350 is a glycosylation site (N-linked (GlcNAc...) asparagine). C572 is a heme binding site.

This sequence belongs to the cytochrome P450 family. Heme serves as cofactor.

It is found in the membrane. It participates in secondary metabolite biosynthesis. Its function is as follows. Cytochrome P450 monooxygenase; part of the gene cluster that mediates the biosynthesis of the glycolipid biosurfactant ustilagic acid (UA). UA is a secreted cellobiose glycolipid that is toxic for many microorganisms and confers biocontrol activity to U.maydis. UA consists of 15,16-dihydroxypalmitic or 2,15,16-trihydroxypalmitic acid, which is O-glycosidically linked to cellobiose at its terminal hydroxyl group. In addition, the cellobiose moiety is acetylated and acylated with a short-chain hydroxy fatty acid. UA biosynthesis starts with omega-hydroxylation of palmitic acid catalyzed by the cytochrome P450 monooxygenase cyp1. Terminal hydroxylation of palmitic acid precedes subterminal hydroxylation catalyzed by the cytochrome P450 monooxygenase cyp2. Sequential glucosylation of the hydroxy fatty acid is probably catalyzed by the glycosyltransferase ugt1. The cellobiose lipid is further decorated by acetylation of the proximal glucose residue and by acylation with a short-chain beta-hydroxy fatty acid at the distal glucose residue. The acyltransferase uat1 may be a good candidate for catalyzing either acetylation or acylation of the cellobiose lipid. The fatty acid synthase fas2 may be involved in synthesis of the carbon backbone of the short-chain beta-hydroxy fatty acid esterified to the cellobiose disaccharide. The secreted UA consists of a mixture of both alpha-hydroxylated and non-hydroxylated glycolipids; therefore, alpha-hydroxylation of the long-chain fatty, catalyzed by the fatty acid hydroxylase ahd1, occurs late in UA biosynthesis and may be the last step before secretion. This chain is Cytochrome P450 monooxygenase cyp1, found in Mycosarcoma maydis (Corn smut fungus).